Here is an 87-residue protein sequence, read N- to C-terminus: Chromosomal protein MC1b (87 aa).

Protects DNA against thermal denaturation and modulates transcription. The protein is Chromosomal protein MC1b of Methanothrix soehngenii (Methanosaeta concilii).